Here is a 371-residue protein sequence, read N- to C-terminus: NADP-dependent oxidoreductase lnaE (371 aa).

NADP(+)-binding positions include 172–175 (DEIG), lysine 198, tyrosine 214, asparagine 237, 277–283 (YGTIAEQ), and 307–309 (FGL).

The protein belongs to the NADP-dependent oxidoreductase L4BD family.

It functions in the pathway secondary metabolite biosynthesis. Its function is as follows. NADP-dependent oxidoreductase; part of the lna gene cluster that mediates the biosynthesis of diastereomeric piperazines. Lna and lnb clusters encode sets of enzymes that produce overlapping sets of previously undescribed metabolites such as piperazinomycin-like metabolites or morpholine. The lna and lnb biosynthetic pathways appear to be part of a signaling network that controls the formation of sclerotia, a resilient overwintering structure. One primary function of the non-canonical nonribosomal peptide synthetases lnaA and lnbA consists in the reduction of L-tyrosine. The presence in the clusters of tailoring enzymes such as the oxidoreductases lnaB, lnbB, lnaE or lnbE, as well as of the cytochrome P450 monooxygenases lnaC, lnaD, or lnbC, might explain formation of various diastereomeric piperazines. The sequence is that of NADP-dependent oxidoreductase lnaE from Aspergillus flavus (strain ATCC 200026 / FGSC A1120 / IAM 13836 / NRRL 3357 / JCM 12722 / SRRC 167).